The following is a 212-amino-acid chain: Large ribosomal subunit protein uL4 (212 aa).

The disordered stretch occupies residues 45–71 (RQGNASTKTRAEVRGGGRKPWRQKGTG). Basic residues predominate over residues 60–71 (GGRKPWRQKGTG).

The protein belongs to the universal ribosomal protein uL4 family. Part of the 50S ribosomal subunit.

Functionally, one of the primary rRNA binding proteins, this protein initially binds near the 5'-end of the 23S rRNA. It is important during the early stages of 50S assembly. It makes multiple contacts with different domains of the 23S rRNA in the assembled 50S subunit and ribosome. Its function is as follows. Forms part of the polypeptide exit tunnel. This chain is Large ribosomal subunit protein uL4, found in Nostoc punctiforme (strain ATCC 29133 / PCC 73102).